The chain runs to 249 residues: MWIGVISLFPDMFRAITDFGVTGRAVKRGLLDINYWNPRDFAHDKHRTVDDRPYGGGPGMLMMVQPLRDAIQAAKQAAGDDVKVIYLSPQGKKLTQSGVTELARCKKLILVAGRYEGIDERIIQSDIDEEWSVGDYVLSGGELPAMTLVDAVSRLVPGVLGDMASAEQDSFTDGLLDCPHYTRPESLDGVVVPDVLLSGNHEYIRRWRLKQSLGRTWQRRPELLDNLALTDEQAKLLAQYVQELNAEQQ.

Residues glycine 113 and 133 to 138 each bind S-adenosyl-L-methionine; that span reads VGDYVL.

Belongs to the RNA methyltransferase TrmD family. In terms of assembly, homodimer.

It is found in the cytoplasm. The enzyme catalyses guanosine(37) in tRNA + S-adenosyl-L-methionine = N(1)-methylguanosine(37) in tRNA + S-adenosyl-L-homocysteine + H(+). Its function is as follows. Specifically methylates guanosine-37 in various tRNAs. The sequence is that of tRNA (guanine-N(1)-)-methyltransferase from Tolumonas auensis (strain DSM 9187 / NBRC 110442 / TA 4).